The chain runs to 401 residues: Probable plasmid-partitioning protein ParB (401 aa).

The tract at residues 232 to 272 (KTRGKENARDKAAAVKEEVKPSKKPKADNGEKTPKGRSHEE) is disordered.

This sequence belongs to the ParB family.

The polypeptide is Probable plasmid-partitioning protein ParB (Xylella fastidiosa (strain 9a5c)).